The sequence spans 348 residues: MDLRGRPKCYSLHLGILPFIVLVLVFFGYGFLSHKIQEFRNPGGETCMATRQTDVQKVVSVPRMAYPQPNVLTPIRNDVLVFTPWLAPIIWEGTFNIDILNEQFKLQNTTIGLTVFAIKKYVVFLKLFLETAEQHFMVGHKVIYYVFTDRPSDVPQVPLGAGRKLVVLTVRNYTRWQDVSMHRMEMISHFSEQRFQHEVDYLVCGDVDMKFSDHVGVEILSALFGTLHPGFYRSRRESFTYERRPKSQAYIPRDEGDFYYAGGFFGGSVVEVHHLTKACHQAMVEDQANGIEAVWHDESHLNKYLLYHKPTKVLSPEYVWDQKLLGWPSIMKKLRYVAVPKNHQAIRN.

Over 1 to 11 the chain is Cytoplasmic; sequence MDLRGRPKCYS. The chain crosses the membrane as a helical; Signal-anchor for type II membrane protein span at residues 12–32; the sequence is LHLGILPFIVLVLVFFGYGFL. The Lumenal segment spans residues 33–348; that stretch reads SHKIQEFRNP…VPKNHQAIRN (316 aa). Asn108 carries an N-linked (GlcNAc...) asparagine glycan. UDP-N-acetyl-alpha-D-galactosamine contacts are provided by residues 116–118, Tyr121, and 206–208; these read FAI and DVD. Asp206 and Asp208 together coordinate Mn(2+). 4 residues coordinate an alpha-L-fucosyl-(1-&gt;2)-beta-D-galactosyl derivative: His228, Thr240, Glu298, and Asp321. Glu298 functions as the Nucleophile in the catalytic mechanism.

This sequence belongs to the glycosyltransferase 6 family. Requires Mn(2+) as cofactor. In terms of tissue distribution, tongue, esophagus, large intestine, stomach, caecum, pancreas, uterus, seminal vesicle, submaxillary gland, parotid gland, thyroid gland, parathyroid gland, salivary gland and thymus (at protein level). Esophagus, large intestine, stomach, kidney, urinary bladder, uterus and thymus.

The protein localises to the golgi apparatus. The protein resides in the golgi stack membrane. It localises to the secreted. It catalyses the reaction an alpha-L-fucosyl-(1-&gt;2)-beta-D-galactosyl derivative + UDP-N-acetyl-alpha-D-galactosamine = an N-acetyl-alpha-D-galactosaminyl-(1-&gt;3)-[alpha-L-fucosyl-(1-&gt;2)]-beta-D-galactosyl derivative + UDP + H(+). The enzyme catalyses an alpha-L-fucosyl-(1-&gt;2)-beta-D-galactosyl derivative + UDP-alpha-D-galactose = an alpha-D-galactosyl-(1-&gt;3)-[alpha-L-fucosyl-(1-&gt;2)]-beta-D-galactosyl derivative + UDP + H(+). Its pathway is protein modification; protein glycosylation. In terms of biological role, possesses strong A transferase activity and weak B transferase activity. This chain is Histo-blood group ABO system transferase 1 (Abo), found in Rattus norvegicus (Rat).